Here is a 588-residue protein sequence, read N- to C-terminus: Aspartate--tRNA ligase (588 aa).

Position 177 (glutamate 177) interacts with L-aspartate. Positions 201 to 204 are aspartate; the sequence is QLFK. Arginine 223 is a binding site for L-aspartate. ATP is bound by residues 223–225 and glutamine 232; that span reads RDE. Histidine 451 serves as a coordination point for L-aspartate. ATP is bound at residue glutamate 485. Arginine 492 serves as a coordination point for L-aspartate. 537–540 contributes to the ATP binding site; the sequence is GLDR.

Belongs to the class-II aminoacyl-tRNA synthetase family. Type 1 subfamily. In terms of assembly, homodimer.

The protein resides in the cytoplasm. It catalyses the reaction tRNA(Asp) + L-aspartate + ATP = L-aspartyl-tRNA(Asp) + AMP + diphosphate. In terms of biological role, catalyzes the attachment of L-aspartate to tRNA(Asp) in a two-step reaction: L-aspartate is first activated by ATP to form Asp-AMP and then transferred to the acceptor end of tRNA(Asp). This Staphylococcus aureus (strain NCTC 8325 / PS 47) protein is Aspartate--tRNA ligase.